The chain runs to 459 residues: Probable ECA polymerase (459 aa).

11 helical membrane passes run 3–23 (LTQF…ILTL), 37–57 (IFFS…TCLL), 65–85 (VVPV…YGIY), 119–139 (LASV…FLLF), 154–174 (GVAL…VYFL), 181–201 (WLFF…VVGG), 206–226 (IIIA…ITLW), 227–247 (MLVT…LKRY), 340–360 (LVVM…GLII), 377–397 (YKAA…IVLA), and 409–429 (VFFC…YWLF).

The protein belongs to the WzyE family. In terms of assembly, probably part of a complex composed of WzxE, WzyE and WzzE.

It is found in the cell inner membrane. Its pathway is bacterial outer membrane biogenesis; enterobacterial common antigen biosynthesis. Functionally, probably involved in the polymerization of enterobacterial common antigen (ECA) trisaccharide repeat units. The protein is Probable ECA polymerase of Photorhabdus laumondii subsp. laumondii (strain DSM 15139 / CIP 105565 / TT01) (Photorhabdus luminescens subsp. laumondii).